Consider the following 340-residue polypeptide: GTP 3',8-cyclase (340 aa).

The Radical SAM core domain occupies 20–246 (RFERQYVYLR…PKALSDGPAK (227 aa)). Arginine 29 is a binding site for GTP. [4Fe-4S] cluster is bound by residues cysteine 36 and cysteine 40. Tyrosine 42 contributes to the S-adenosyl-L-methionine binding site. Cysteine 43 contributes to the [4Fe-4S] cluster binding site. Position 79 (arginine 79) interacts with GTP. Position 83 (glycine 83) interacts with S-adenosyl-L-methionine. Residue threonine 110 participates in GTP binding. Serine 134 lines the S-adenosyl-L-methionine pocket. Lysine 171 serves as a coordination point for GTP. S-adenosyl-L-methionine is bound at residue methionine 205. 2 residues coordinate [4Fe-4S] cluster: cysteine 268 and cysteine 271. Residue 273-275 (RLR) participates in GTP binding. Cysteine 285 contacts [4Fe-4S] cluster.

The protein belongs to the radical SAM superfamily. MoaA family. Monomer and homodimer. The cofactor is [4Fe-4S] cluster.

It catalyses the reaction GTP + AH2 + S-adenosyl-L-methionine = (8S)-3',8-cyclo-7,8-dihydroguanosine 5'-triphosphate + 5'-deoxyadenosine + L-methionine + A + H(+). The protein operates within cofactor biosynthesis; molybdopterin biosynthesis. Functionally, catalyzes the cyclization of GTP to (8S)-3',8-cyclo-7,8-dihydroguanosine 5'-triphosphate. The protein is GTP 3',8-cyclase of Actinobacillus pleuropneumoniae serotype 5b (strain L20).